A 318-amino-acid chain; its full sequence is Vomeronasal type-1 receptor 45 (318 aa).

Topologically, residues 1–32 (MSEILFFSPQPLFSHMMNKNSRLHTHSNIKNT) are extracellular. The helical transmembrane segment at 33-53 (FFSEIGIGILGNSFLLLFHIL) threads the bilayer. The Cytoplasmic portion of the chain corresponds to 54–65 (KFIRGHRLRLTD). The chain crosses the membrane as a helical span at residues 66–86 (LPIGLLSLIHLLMLLLMAFIA). Residues 87–109 (TDIFISRRGWDDIICKFLVYLYR) are Extracellular-facing. An intrachain disulfide couples cysteine 101 to cysteine 188. Residues 110 to 130 (VLRGLSLCTTSMLSVLQAIIL) form a helical membrane-spanning segment. Residues 131-150 (SPRSSCLAKLKHKYPHHISC) lie on the Cytoplasmic side of the membrane. Residues 151 to 171 (AIIFLSVLYMLISSHILLSII) traverse the membrane as a helical segment. Residues 172–206 (ATPNLTRNDFLYVTQSCSILPLSYVMQSMYSTLLA) lie on the Extracellular side of the membrane. Residue asparagine 175 is glycosylated (N-linked (GlcNAc...) asparagine). A helical transmembrane segment spans residues 207–227 (LREVFLISLMVLSTLYMVVLL). At 228–254 (CRHRKQAQHLQGTSLSPKASAEQRATQ) the chain is on the cytoplasmic side. A helical membrane pass occupies residues 255–275 (TILMLMTFFVLMSIFDSIVSC). The Extracellular portion of the chain corresponds to 276-285 (SRTMFLDDPT). Residues 286-306 (SYSIHIFVMHIYATVSPFVFM) form a helical membrane-spanning segment. Topologically, residues 307–318 (STEKHIVNILRG) are cytoplasmic.

The protein belongs to the G-protein coupled receptor 1 family. Expressed in a subset of sensory neurons located in the apical layer of the vomeronasal organ.

The protein localises to the cell membrane. Putative pheromone receptor implicated in the regulation of social and reproductive behavior. The sequence is that of Vomeronasal type-1 receptor 45 (Vmn1r45) from Mus musculus (Mouse).